The chain runs to 657 residues: Tyrosine-protein phosphatase vhp-1 (657 aa).

The region spanning 21-151 (APDTTLVVDC…FAQQYPQLCE (131 aa)) is the Rhodanese domain. In terms of domain architecture, Tyrosine-protein phosphatase spans 175–318 (GITLITPNIY…LLEYENVLIK (144 aa)). Cys-262 functions as the Phosphocysteine intermediate in the catalytic mechanism. 3 disordered regions span residues 353-426 (SNCV…MDLG), 539-563 (VPAGSSSISTPSGSQSTPASASSSA), and 581-657 (PAST…PCHQ). Over residues 366–405 (SPSSPSVSEGSAASEPETSSSAASSSSTASAPPSMPSTSE) the composition is skewed to low complexity. The segment covering 406 to 419 (QGTSSGTVNVNGKR) has biased composition (polar residues). Composition is skewed to low complexity over residues 542 to 563 (GSSSISTPSGSQSTPASASSSA) and 581 to 597 (PASTSTPASSTPGTSRA).

This sequence belongs to the protein-tyrosine phosphatase family. Non-receptor class dual specificity subfamily. As to quaternary structure, may interact with pmk-3. In terms of tissue distribution, expressed in the pharynx, intestine, neurons and vulval hypodermal cells.

The enzyme catalyses O-phospho-L-tyrosyl-[protein] + H2O = L-tyrosyl-[protein] + phosphate. Acts preferentially on the c-Jun N-terminal kinase (JNK) and p38 MAPKs. Plays an important role in the heavy metal stress response and in axon regeneration by negatively regulating the kgb-1 (JNK-like) and the pmk-1 (p38-type) MAPK signaling pathways. The chain is Tyrosine-protein phosphatase vhp-1 (vhp-1) from Caenorhabditis elegans.